Reading from the N-terminus, the 406-residue chain is Homocysteine-responsive endoplasmic reticulum-resident ubiquitin-like domain member 2 protein (406 aa).

Residues 10-89 form the Ubiquitin-like domain; it reads VTLIIKAPNQ…HMVHLVCTSR (80 aa). Residues 86 to 156 form a disordered region; sequence CTSRTPPSSP…PQAQTDPAQS (71 aa). 2 stretches are compositionally biased toward low complexity: residues 87 to 98 and 109 to 139; these read TSRTPPSSPKSS and SNSNSSSDQSGSSTPSSSQETLTLATSSSSE. Residues 145-156 show a composition bias toward polar residues; the sequence is TLPQAQTDPAQS. Residues 302 to 322 traverse the membrane as a helical segment; it reads FIMVMGAMLLVYLHQAGWFPF.

The protein resides in the membrane. Could be involved in the unfolded protein response (UPR) pathway. This is Homocysteine-responsive endoplasmic reticulum-resident ubiquitin-like domain member 2 protein (HERPUD2) from Bos taurus (Bovine).